The following is a 611-amino-acid chain: Nuclear cap-binding protein subunit 3 (611 aa).

The disordered stretch occupies residues 1 to 44 (MAAVRGLRVSVKAGGGAEPEPMEVEEGEVEAAADRASPREVVSG). Residues 20–31 (EPMEVEEGEVEA) are compositionally biased toward acidic residues. Positions 108–169 (ETLYVYGVDD…LSSMPTNEKG (62 aa)) are RNA recognition motif (RRM) domain. The WLDD motif; essential for 7-methylguanosine-containing mRNA cap binding motif lies at 137 to 140 (WLDD). Disordered regions lie at residues 159 to 230 (NLSS…PDTL), 338 to 360 (EEPIEEEEEEEEEEEDMDEDDRV), 373 to 393 (REREGARRSAASNSDSDEMDY), 423 to 568 (KTIR…DSVL), and 583 to 611 (RQKKSRLDNLPSLQIEISRESSSGSDTDS). The span at 168–179 (KGQRKKDGEHSS) shows a compositional bias: basic and acidic residues. Composition is skewed to acidic residues over residues 196–218 (DETEEGEVEEDNPSEAEDEDETE) and 339–358 (EPIEEEEEEEEEEEDMDEDD). A compositionally biased stretch (polar residues) spans 423–439 (KTIRNSMRSDSVGNSVK). The segment covering 446–463 (SHAEKPADVRLILEEKRQ) has biased composition (basic and acidic residues). Residues 464–475 (STASRQQSSSGK) show a composition bias toward low complexity. Basic and acidic residues-rich tracts occupy residues 501–511 (SRREPLSDVHS) and 544–556 (PKDKERPSEKSEK). Residues 602-611 (ESSSGSDTDS) show a composition bias toward low complexity.

The protein belongs to the NCBP3 family. In terms of assembly, component of an alternative cap-binding complex (CBC) composed of NCBP1/CBP80 and NCBP3.

The protein localises to the nucleus. It is found in the cytoplasm. Its function is as follows. Associates with NCBP1/CBP80 to form an alternative cap-binding complex (CBC) which plays a key role in mRNA export. NCBP3 serves as adapter protein linking the capped RNAs (m7GpppG-capped RNA) to NCBP1/CBP80. Unlike the conventional CBC with NCBP2 which binds both small nuclear RNA (snRNA) and messenger (mRNA) and is involved in their export from the nucleus, the alternative CBC with NCBP3 does not bind snRNA and associates only with mRNA thereby playing a role in only mRNA export. The chain is Nuclear cap-binding protein subunit 3 from Xenopus tropicalis (Western clawed frog).